The chain runs to 243 residues: uncharacterized protein (243 aa).

A run of 4 helical transmembrane segments spans residues 38-58, 99-119, 143-163, and 204-224; these read AYFL…VGIF, FGIA…FLGY, FYFS…FLVL, and AFAT…LGLF.

It localises to the cell membrane. This is an uncharacterized protein from Mycoplasma pneumoniae (strain ATCC 29342 / M129 / Subtype 1) (Mycoplasmoides pneumoniae).